The sequence spans 134 residues: Ribonuclease P protein component (134 aa).

Belongs to the RnpA family. As to quaternary structure, consists of a catalytic RNA component (M1 or rnpB) and a protein subunit.

It catalyses the reaction Endonucleolytic cleavage of RNA, removing 5'-extranucleotides from tRNA precursor.. RNaseP catalyzes the removal of the 5'-leader sequence from pre-tRNA to produce the mature 5'-terminus. It can also cleave other RNA substrates such as 4.5S RNA. The protein component plays an auxiliary but essential role in vivo by binding to the 5'-leader sequence and broadening the substrate specificity of the ribozyme. This is Ribonuclease P protein component from Pseudomonas putida (strain ATCC 700007 / DSM 6899 / JCM 31910 / BCRC 17059 / LMG 24140 / F1).